Consider the following 379-residue polypeptide: SUN domain-containing protein 5 (379 aa).

Positions 1-45 (MPRSSRSPGDPGALLEDVAHNPRPRRIAQRGRNTSRMAEDTSPNM) are disordered. Residues 1 to 105 (MPRSSRSPGD…LLCQKLMEKT (105 aa)) are Nuclear-facing. The segment covering 31–45 (GRNTSRMAEDTSPNM) has biased composition (polar residues). A helical membrane pass occupies residues 106 to 122 (GILLLCAFGFWMFSIHL). Residues 123-379 (PSKMKVWQDD…PHQNPYPKRD (257 aa)) are Perinuclear space-facing. A coiled-coil region spans residues 141-182 (LRLYQEKVRHHSGEIQDLRGSMNQLIAKLQEMEAMSDEQKMA). The region spanning 205-364 (GASIDFEHTS…YRVRVHGSVA (160 aa)) is the SUN domain.

Probable homotrimer. Interacts with DNAJB13. Highly glycosylated in the Golgi apparatus during spermiogenesis. In terms of tissue distribution, sperm (at protein level). Widely expressed. Conflictingly shown to be specifically expressed in testis.

The protein resides in the nucleus inner membrane. It localises to the golgi apparatus. Plays an essential role in anchoring sperm head to the tail. Is responsible for the attachment of the coupling apparatus to the sperm nuclear envelope. The polypeptide is SUN domain-containing protein 5 (SUN5) (Homo sapiens (Human)).